A 268-amino-acid polypeptide reads, in one-letter code: TodF product hydratase (268 aa).

The protein belongs to the hydratase/decarboxylase family.

Its pathway is xenobiotic degradation; toluene degradation. Converts the product of 2-hydroxy-6-oxo-2,4-heptadienoate hydrolase. The chain is TodF product hydratase (todJ) from Pseudomonas putida (strain ATCC 700007 / DSM 6899 / JCM 31910 / BCRC 17059 / LMG 24140 / F1).